The primary structure comprises 359 residues: Histamine H2 receptor (359 aa).

Residues 1-22 (MAPNGTASSFCLDSTACKITIT) lie on the Extracellular side of the membrane. A glycan (N-linked (GlcNAc...) asparagine) is linked at Asn-4. A helical membrane pass occupies residues 23–44 (VVLAVLILITVAGNVVVCLAVG). The Cytoplasmic portion of the chain corresponds to 45–57 (LNRRLRNLTNCFI). The helical transmembrane segment at 58–81 (VSLAITDLLLGLLVLPFSAIYQLS) threads the bilayer. Residues 82–92 (CKWSFGKVFCN) are Extracellular-facing. Residues Cys-91 and Cys-174 are joined by a disulfide bond. The chain crosses the membrane as a helical span at residues 93-114 (IYTSLDVMLCTASILNLFMISL). The Cytoplasmic portion of the chain corresponds to 115 to 134 (DRYCAVMDPLRYPVLVTPVR). A helical membrane pass occupies residues 135–159 (VAISLVLIWVISITLSFLSIHLGWN). Topologically, residues 160–180 (SRNETSKGNHTTSKCKVQVNE) are extracellular. A helical membrane pass occupies residues 181 to 204 (VYGLVDGLVTFYLPLLIMCITYYR). At 205–234 (IFKVARDQAKRINHISSWKAATIREHKATV) the chain is on the cytoplasmic side. A helical transmembrane segment spans residues 235 to 258 (TLAAVMGAFIICWFPYFTAFVYRG). The Extracellular segment spans residues 259-267 (LRGDDAINE). Residues 268–289 (VLEAIVLWLGYANSALNPILYA) form a helical membrane-spanning segment. Residues 290–359 (ALNRDFRTGY…VTAPQGATDR (70 aa)) lie on the Cytoplasmic side of the membrane. Residue Cys-305 is the site of S-palmitoyl cysteine attachment. The disordered stretch occupies residues 316-340 (SLRSNASQLSRTQSREPRQQEEKPL). A compositionally biased stretch (polar residues) spans 317–327 (LRSNASQLSRT). Residues 328 to 340 (QSREPRQQEEKPL) are compositionally biased toward basic and acidic residues.

It belongs to the G-protein coupled receptor 1 family.

It localises to the cell membrane. Its function is as follows. The H2 subclass of histamine receptors mediates gastric acid secretion. Also appears to regulate gastrointestinal motility and intestinal secretion. Possible role in regulating cell growth and differentiation. The activity of this receptor is mediated by G proteins which activate adenylyl cyclase and, through a separate G protein-dependent mechanism, the phosphoinositide/protein kinase (PKC) signaling pathway. This Gorilla gorilla gorilla (Western lowland gorilla) protein is Histamine H2 receptor (HRH2).